Here is a 1780-residue protein sequence, read N- to C-terminus: Chitin synthase Vb (1780 aa).

Asn133, Asn153, Asn629, Asn644, Asn655, and Asn660 each carry an N-linked (GlcNAc...) asparagine glycan. The next 2 helical transmembrane spans lie at 740 to 760 (AWIA…LKFI) and 776 to 796 (FVLF…IIGF). The Cytochrome b5 heme-binding domain maps to 805–866 (NKAWNVKEVA…LSGMVMDNYF (62 aa)). N-linked (GlcNAc...) asparagine glycosylation is found at Asn888 and Asn1009. The chain crosses the membrane as a helical span at residues 1046–1066 (LLLAFAIIICIVTAVKFLAAL). Asn1411 carries N-linked (GlcNAc...) asparagine glycosylation. The next 3 membrane-spanning stretches (helical) occupy residues 1442–1462 (LCGT…IYIL), 1469–1489 (IPYI…LIFI), and 1497–1517 (IGWM…LPLY). An N-linked (GlcNAc...) asparagine glycan is attached at Asn1524. A disordered region spans residues 1649 to 1691 (TGVHDMRSQSPYQDYPGQHPSVSNLRGQANLSPATGGGHSRSG). The span at 1668–1681 (PSVSNLRGQANLSP) shows a compositional bias: polar residues. Residues 1722 to 1778 (GPNDMAIVESIRSVLCEVDLDTVTKKQVRALVEQRLQTELVGERRTFMDRQIDHELE) enclose the DEK-C domain.

The protein belongs to the chitin synthase family. Class VII subfamily.

The protein resides in the cell membrane. It carries out the reaction [(1-&gt;4)-N-acetyl-beta-D-glucosaminyl](n) + UDP-N-acetyl-alpha-D-glucosamine = [(1-&gt;4)-N-acetyl-beta-D-glucosaminyl](n+1) + UDP + H(+). Its function is as follows. Polymerizes chitin, a structural polymer of the cell wall and septum, by transferring the sugar moiety of UDP-GlcNAc to the non-reducing end of the growing chitin polymer. ChsV and chsVb do perform additive, but not redundant, functions in septum formation. Functions not only in the maintenance of cell wall integrity under different osmotic conditions but also in polarized cell wall synthesis. Plays an important role in the complex infection process of this fungus. The chain is Chitin synthase Vb from Fusarium oxysporum f. sp. lycopersici (strain 4287 / CBS 123668 / FGSC 9935 / NRRL 34936) (Fusarium vascular wilt of tomato).